A 248-amino-acid chain; its full sequence is 23S rRNA (guanosine(2553)-2'-O)-methyltransferase RlmP (248 aa).

S-adenosyl-L-methionine contacts are provided by arginine 123, glycine 204, valine 224, and leucine 233.

Belongs to the class IV-like SAM-binding methyltransferase superfamily. RNA methyltransferase TrmH family. Homodimer.

It localises to the cytoplasm. The catalysed reaction is guanosine(2553) in 23S rRNA + S-adenosyl-L-methionine = 2'-O-methylguanosine(2553) in 23S rRNA + S-adenosyl-L-homocysteine + H(+). Specifically methylates the ribose of guanosine 2553 (G2553) in 23S rRNA. When the target G2553 is mutated, is able to methylate the ribose of adenosine, but it cannot methylate cytidine nor uridine. Modifies free 23S rRNA but not the fully assembled ribosome nor the 50S subunit, suggesting that the modification occurs early during ribosome biogenesis. The chain is 23S rRNA (guanosine(2553)-2'-O)-methyltransferase RlmP from Bacillus subtilis (strain 168).